Reading from the N-terminus, the 360-residue chain is Transcriptional coactivator MYCFIDRAFT_190109 (360 aa).

Residues 3–67 (GMALNQLLAC…GFLHEPRPGQ (65 aa)) enclose the HTH iclR-type domain. The segment at residues 33-52 (ARDVADLTGVPETQLCRVVR) is a DNA-binding region (H-T-H motif).

The protein localises to the nucleus. Transcriptional coactivator; part of the gene cluster that mediates the biosynthesis of an emodin derivative that may be involved in black Sigatoka disease of banana. With MYCFIDRAFT_198930, coregulates the production of the PKS8-1 cluster product. This chain is Transcriptional coactivator MYCFIDRAFT_190109, found in Pseudocercospora fijiensis (strain CIRAD86) (Black leaf streak disease fungus).